The primary structure comprises 199 residues: uncharacterized protein (199 aa).

This is an uncharacterized protein from Methanocaldococcus jannaschii (strain ATCC 43067 / DSM 2661 / JAL-1 / JCM 10045 / NBRC 100440) (Methanococcus jannaschii).